Reading from the N-terminus, the 93-residue chain is Small ribosomal subunit protein uS19 (93 aa).

The protein belongs to the universal ribosomal protein uS19 family.

Protein S19 forms a complex with S13 that binds strongly to the 16S ribosomal RNA. The polypeptide is Small ribosomal subunit protein uS19 (Nitratidesulfovibrio vulgaris (strain ATCC 29579 / DSM 644 / CCUG 34227 / NCIMB 8303 / VKM B-1760 / Hildenborough) (Desulfovibrio vulgaris)).